The sequence spans 316 residues: Bifunctional peptidase and (3S)-lysyl hydroxylase JMJD7 (316 aa).

A JmjC domain is found at 128–307 (VQKQCSNLPS…LKYSYFQLLD (180 aa)). Residues H178, D180, and H277 each coordinate Fe cation.

In terms of assembly, homodimer; disulfide-linked. Interacts with DRG1 and DRG2. Fe(2+) serves as cofactor.

It is found in the nucleus. The protein localises to the cytoplasm. The enzyme catalyses L-lysyl-[protein] + 2-oxoglutarate + O2 = (3S)-3-hydroxy-L-lysyl-[protein] + succinate + CO2. Its function is as follows. Bifunctional enzyme that acts both as an endopeptidase and 2-oxoglutarate-dependent monooxygenase. Endopeptidase that cleaves histones N-terminal tails at the carboxyl side of methylated arginine or lysine residues, to generate 'tailless nucleosomes', which may trigger transcription elongation. Preferentially recognizes and cleaves monomethylated and dimethylated arginine residues of histones H2, H3 and H4. After initial cleavage, continues to digest histones tails via its aminopeptidase activity. Additionally, may play a role in protein biosynthesis by modifying the translation machinery. Acts as a Fe(2+) and 2-oxoglutarate-dependent monooxygenase, catalyzing (S)-stereospecific hydroxylation at C-3 of 'Lys-22' of DRG1 and 'Lys-21' of DRG2 translation factors (TRAFAC), promoting their interaction with ribonucleic acids (RNA). In Homo sapiens (Human), this protein is Bifunctional peptidase and (3S)-lysyl hydroxylase JMJD7.